Here is a 415-residue protein sequence, read N- to C-terminus: UDP-galactose transporter homolog 1 (415 aa).

Residues 1 to 39 (MHLVPEGSESMSTQQNGSAQKPVTLNGSASTKGQAPEAP) are disordered. Polar residues predominate over residues 9-33 (ESMSTQQNGSAQKPVTLNGSASTKG). N-linked (GlcNAc...) asparagine glycans are attached at residues asparagine 16 and asparagine 26. A run of 5 helical transmembrane segments spans residues 45–65 (LIQLAICVLGIYASFLSWGVL), 95–115 (IVLNTIQSTFAAITGFLYLYF), 132–152 (ILFPLLLVSISSSLASPFGYA), 161–181 (TFILAKSCKLLPVMFLHLTIF), and 185–205 (YPLYKYGVVLLVTLGVATFTL). Asparagine 221 is a glycosylation site (N-linked (GlcNAc...) asparagine). Residues 223 to 243 (SGSSLYGIFLLSINLLLDGLT) form a helical membrane-spanning segment. An N-linked (GlcNAc...) asparagine glycan is attached at asparagine 244. A run of 3 helical transmembrane segments spans residues 281–301 (LLVMPHLSSTGALHALLPIPI), 325–345 (NVLGFAACGAIGQLFIFYTLS), and 368–388 (VFWFGHTLSAGQWLGIGLVFG).

This sequence belongs to the nucleotide-sugar transporter family. SLC35B subfamily.

Its subcellular location is the endoplasmic reticulum membrane. May be involved in specific transport of UDP-Gal from the cytosol to the Golgi lumen. Involved in the maintenance of optimal conditions for the folding of secretory pathway proteins in the endoplasmic reticulum. This is UDP-galactose transporter homolog 1 (hut1) from Aspergillus fumigatus (strain ATCC MYA-4609 / CBS 101355 / FGSC A1100 / Af293) (Neosartorya fumigata).